Consider the following 610-residue polypeptide: Pentatricopeptide repeat-containing protein At5g40400 (610 aa).

12 PPR repeats span residues 165-199 (DPVV…GFSV), 200-234 (SVVT…GIHP), 235-269 (NTYT…GFEP), 270-304 (DLVT…RVVP), 305-339 (DLVT…GIKP), 340-374 (DCMS…SVVP), 375-409 (DRFT…KVDI), 410-445 (PFEV…GHEA), 446-480 (KPET…NQVL), 481-515 (DAKT…EVKP), 516-546 (DSFI…FAME), and 551-586 (DPES…GFVP).

The protein belongs to the PPR family. P subfamily.

The protein is Pentatricopeptide repeat-containing protein At5g40400 of Arabidopsis thaliana (Mouse-ear cress).